The following is a 141-amino-acid chain: Large ribosomal subunit protein uL11A (141 aa).

Belongs to the universal ribosomal protein uL11 family. As to quaternary structure, part of the ribosomal stalk of the 50S ribosomal subunit. Interacts with L10 and the large rRNA to form the base of the stalk. L10 forms an elongated spine to which L12 dimers bind in a sequential fashion forming a multimeric L10(L12)X complex. In terms of processing, one or more lysine residues are methylated.

Functionally, forms part of the ribosomal stalk which helps the ribosome interact with GTP-bound translation factors. This Halalkalibacterium halodurans (strain ATCC BAA-125 / DSM 18197 / FERM 7344 / JCM 9153 / C-125) (Bacillus halodurans) protein is Large ribosomal subunit protein uL11A.